The sequence spans 601 residues: Elongation factor 4 (601 aa).

Residues 5–187 form the tr-type G domain; that stretch reads SNIRNFSIIA…AIVERLPAPE (183 aa). GTP is bound by residues 17–22 and 134–137; these read DHGKST and NKID.

The protein belongs to the TRAFAC class translation factor GTPase superfamily. Classic translation factor GTPase family. LepA subfamily.

It localises to the cell inner membrane. It carries out the reaction GTP + H2O = GDP + phosphate + H(+). In terms of biological role, required for accurate and efficient protein synthesis under certain stress conditions. May act as a fidelity factor of the translation reaction, by catalyzing a one-codon backward translocation of tRNAs on improperly translocated ribosomes. Back-translocation proceeds from a post-translocation (POST) complex to a pre-translocation (PRE) complex, thus giving elongation factor G a second chance to translocate the tRNAs correctly. Binds to ribosomes in a GTP-dependent manner. This is Elongation factor 4 from Oleidesulfovibrio alaskensis (strain ATCC BAA-1058 / DSM 17464 / G20) (Desulfovibrio alaskensis).